Reading from the N-terminus, the 969-residue chain is Manganese resistance protein MNR2 (969 aa).

The span at methionine 1–glycine 11 shows a compositional bias: basic and acidic residues. Disordered regions lie at residues methionine 1–proline 49, glycine 96–proline 153, histidine 167–asparagine 186, and valine 199–serine 256. Residues methionine 1–threonine 912 are Cytoplasmic-facing. A compositionally biased stretch (low complexity) spans proline 13 to glutamine 23. Over residues leucine 24–aspartate 36 the composition is skewed to basic residues. Residues lysine 37–arginine 48 show a composition bias toward basic and acidic residues. The residue at position 114 (serine 114) is a Phosphoserine. Over residues serine 141 to serine 152 the composition is skewed to polar residues. Position 175 is a phosphoserine (serine 175). Threonine 177 carries the post-translational modification Phosphothreonine. Serine 182 is subject to Phosphoserine. 2 stretches are compositionally biased toward low complexity: residues asparagine 225–aspartate 234 and serine 244–serine 256. Serine 383 carries the phosphoserine modification. Disordered regions lie at residues valine 559–glutamate 662 and glutamine 746–alanine 769. The span at glutamate 565–serine 578 shows a compositional bias: basic and acidic residues. Threonine 571 carries the phosphothreonine modification. 2 positions are modified to phosphoserine: serine 576 and serine 582. Low complexity-rich tracts occupy residues serine 590–serine 607 and alanine 622–serine 632. The span at aspartate 749–alanine 769 shows a compositional bias: acidic residues. Residues isoleucine 913–isoleucine 933 traverse the membrane as a helical segment. The Extracellular portion of the chain corresponds to valine 934–serine 941. The chain crosses the membrane as a helical span at residues leucine 942–tyrosine 962. Topologically, residues threonine 963–phenylalanine 969 are cytoplasmic.

This sequence belongs to the CorA metal ion transporter (MIT) (TC 1.A.35) family.

It is found in the membrane. This Saccharomyces cerevisiae (strain ATCC 204508 / S288c) (Baker's yeast) protein is Manganese resistance protein MNR2 (MNR2).